The primary structure comprises 736 residues: Probable methionine--tRNA ligase, cytoplasmic (736 aa).

Positions 25–35 (PYVNNVPHLGN) match the 'HIGH' region motif. Positions 346–350 (KFSKS) match the 'KMSKS' region motif. Lys349 contacts ATP. Residues 573-680 (PEFPIDMKIA…QSIEAGSKIA (108 aa)) enclose the tRNA-binding domain.

Belongs to the class-I aminoacyl-tRNA synthetase family.

It is found in the cytoplasm. It catalyses the reaction tRNA(Met) + L-methionine + ATP = L-methionyl-tRNA(Met) + AMP + diphosphate. The polypeptide is Probable methionine--tRNA ligase, cytoplasmic (metS) (Dictyostelium discoideum (Social amoeba)).